The primary structure comprises 207 residues: NAD(P)H dehydrogenase (quinone) (207 aa).

One can recognise a Flavodoxin-like domain in the interval 3-194; sequence VQIIFYSMYG…EMAKFQGRHV (192 aa). FMN contacts are provided by residues 9–14 and 82–84; these read SMYGHI and TRF. Tyr-11 serves as a coordination point for NAD(+). Residue Trp-102 coordinates substrate. FMN contacts are provided by residues 117 to 123 and His-138; that span reads STATQHG.

The protein belongs to the WrbA family. The cofactor is FMN.

The enzyme catalyses a quinone + NADH + H(+) = a quinol + NAD(+). It carries out the reaction a quinone + NADPH + H(+) = a quinol + NADP(+). The protein is NAD(P)H dehydrogenase (quinone) of Aromatoleum aromaticum (strain DSM 19018 / LMG 30748 / EbN1) (Azoarcus sp. (strain EbN1)).